Here is a 145-residue protein sequence, read N- to C-terminus: Ecdysteroid-regulated 16 kDa protein (145 aa).

Positions 1–16 are cleaved as a signal peptide; that stretch reads MLFYITVTVLLVSAQA. 2 disulfides stabilise this stretch: Cys22–Cys137 and Cys90–Cys97. N-linked (GlcNAc...) asparagine glycosylation occurs at Asn51.

Belongs to the NPC2 family.

The protein resides in the secreted. The chain is Ecdysteroid-regulated 16 kDa protein (ESR16) from Manduca sexta (Tobacco hawkmoth).